A 171-amino-acid polypeptide reads, in one-letter code: Small ribosomal subunit protein mS25 (171 aa).

It belongs to the mitochondrion-specific ribosomal protein mS25 family. Component of the mitochondrial ribosome small subunit (28S) which comprises a 12S rRNA and about 30 distinct proteins.

The protein localises to the mitochondrion. This is Small ribosomal subunit protein mS25 (Mrps25) from Mus musculus (Mouse).